Here is a 65-residue protein sequence, read N- to C-terminus: Cell death protein rpr (65 aa).

In terms of assembly, interacts with Diap2 (via BIR2 domain).

Its function is as follows. Activator of apoptosis, as well as grim and hid, that acts on the effector Dredd. The sequence is that of Cell death protein rpr (rpr) from Drosophila melanogaster (Fruit fly).